Reading from the N-terminus, the 853-residue chain is Stachyose synthase (853 aa).

The propeptide occupies 1–11; the sequence is MAPPLNSTTSN.

This sequence belongs to the glycosyl hydrolases 36 family.

It is found in the cytoplasm. The catalysed reaction is alpha-D-galactosyl-(1-&gt;3)-1D-myo-inositol + raffinose = stachyose + myo-inositol. It functions in the pathway glycan metabolism; stachyose biosynthesis; stachyose from raffinose: step 1/1. Its function is as follows. Catalyzes stachyose synthesis by transfer of a galactosyl moiety from galactinol to raffinose. Also catalyzes verbascose synthesis by galactosyl transfer from galactinol to stachyose or from one stachyose molecule to another. Oligosaccharides of the raffinose family play a protective role in maturation drying of seeds. They may act as cryoprotectants in frost-hardy plants. This Pisum sativum (Garden pea) protein is Stachyose synthase (STS1).